Reading from the N-terminus, the 188-residue chain is Peptide deformylase (188 aa).

The interval 70-90 (AEPVACDHDGHHHHHQPTKKE) is disordered. Cys-113 and His-155 together coordinate Fe cation. Residue Glu-156 is part of the active site. His-159 contributes to the Fe cation binding site.

Belongs to the polypeptide deformylase family. It depends on Fe(2+) as a cofactor.

The catalysed reaction is N-terminal N-formyl-L-methionyl-[peptide] + H2O = N-terminal L-methionyl-[peptide] + formate. Functionally, removes the formyl group from the N-terminal Met of newly synthesized proteins. Requires at least a dipeptide for an efficient rate of reaction. N-terminal L-methionine is a prerequisite for activity but the enzyme has broad specificity at other positions. This chain is Peptide deformylase, found in Novosphingobium aromaticivorans (strain ATCC 700278 / DSM 12444 / CCUG 56034 / CIP 105152 / NBRC 16084 / F199).